The sequence spans 95 residues: Protein TusB (95 aa).

Belongs to the DsrH/TusB family. In terms of assembly, heterohexamer, formed by a dimer of trimers. The hexameric TusBCD complex contains 2 copies each of TusB, TusC and TusD. The TusBCD complex interacts with TusE.

The protein localises to the cytoplasm. Functionally, part of a sulfur-relay system required for 2-thiolation of 5-methylaminomethyl-2-thiouridine (mnm(5)s(2)U) at tRNA wobble positions. The chain is Protein TusB from Pectobacterium carotovorum subsp. carotovorum (strain PC1).